The sequence spans 162 residues: CDDAMRKTESDKCTNIGGKFDPSTCKCTPETVTEGPTTCLESSESDEVTTKKPCDCTCAPDCKRRKMIIDVLLKYFYRDVYDKDCCKKNCDCDGAKFPECEESNSKQSGMFDILAKLFKPQGGDFEAGSVEVDGKKLTSEKKEKFGKALQDAVKGLEDILNS.

The segment at 1–31 is last constant region; sequence CDDAMRKTESDKCTNIGGKFDPSTCKCTPET. Residues 32–51 are last Cys-1 repeat; that stretch reads VTEGPTTCLESSESDEVTTK. The unique region stretch occupies residues 52 to 162; sequence KPCDCTCAPD…VKGLEDILNS (111 aa).

In terms of tissue distribution, salivary gland.

The protein localises to the secreted. Used by the larvae to construct a supramolecular structure, the larval tube. This is Balbiani ring protein 2 (BR2) from Chironomus pallidivittatus (Midge).